We begin with the raw amino-acid sequence, 377 residues long: tRNA-splicing endonuclease subunit SEN2 (377 aa).

A coiled-coil region spans residues 119–174; the sequence is ETEMTLEKVTQQRRLQRLEFKKERAKLERELLELRKKGGHIDEENILLEKQRESLR. Active-site residues include Tyr-289, His-297, and Lys-328.

The protein belongs to the tRNA-intron endonuclease family. As to quaternary structure, heterotetramer composed of SEN2, SEN15, SEN34 and SEN54. Interacts directly with SEN54.

It is found in the nucleus. Its subcellular location is the endomembrane system. The protein localises to the mitochondrion outer membrane. The catalysed reaction is pretRNA = a 3'-half-tRNA molecule with a 5'-OH end + a 5'-half-tRNA molecule with a 2',3'-cyclic phosphate end + an intron with a 2',3'-cyclic phosphate and a 5'-hydroxyl terminus.. Its function is as follows. Constitutes one of the two catalytic subunit of the tRNA-splicing endonuclease complex, a complex responsible for identification and cleavage of the splice sites in pre-tRNA. It cleaves pre-tRNA at the 5'- and 3'-splice sites to release the intron. The products are an intron and two tRNA half-molecules bearing 2',3'-cyclic phosphate and 5'-OH termini. There are no conserved sequences at the splice sites, but the intron is invariably located at the same site in the gene, placing the splice sites an invariant distance from the constant structural features of the tRNA body. This subunit may anchor the endonuclease complex to the nuclear membrane. Probably carries the active site for 5'-splice site cleavage. This chain is tRNA-splicing endonuclease subunit SEN2 (SEN2), found in Saccharomyces cerevisiae (strain ATCC 204508 / S288c) (Baker's yeast).